The following is a 378-amino-acid chain: SWI/SNF-related matrix-associated actin-dependent regulator of chromatin subfamily B member 1 (378 aa).

The DNA-binding stretch occupies residues 1 to 106 (MIMALSKTFG…DEKYKAVSIS (106 aa)).

The protein belongs to the SNF5 family. As to quaternary structure, component of the multiprotein chromatin-remodeling complexes SWI/SNF. Component of neural progenitors-specific chromatin remodeling complex (npBAF complex) and the neuron-specific chromatin remodeling complex (nBAF complex). Component of the BAF (SWI/SNF) chromatin remodeling complex. Component of the SWI/SNF-B (PBAF) chromatin remodeling complex. Binds to double-stranded DNA.

The protein resides in the nucleus. Its function is as follows. Involved in chromatin-remodeling. Core component of the BAF (SWI/SNF) complex. This ATP-dependent chromatin-remodeling complex plays important roles in cell proliferation and differentiation, in cellular antiviral activities and inhibition of tumor formation. Belongs to the neural progenitors-specific chromatin remodeling complex (npBAF complex) and the neuron-specific chromatin remodeling complex (nBAF complex) and may play a role in neural development. In Xenopus laevis (African clawed frog), this protein is SWI/SNF-related matrix-associated actin-dependent regulator of chromatin subfamily B member 1 (smarcb1).